Here is a 550-residue protein sequence, read N- to C-terminus: MNFSNGSKSSTFTIAPSGSCIALPPQRGVATSKYAVHASCLQEYLDKEAWKDDTLIIDLRPVSEFSKSRIKGSVNLSLPATLIKRPAFSVARIISNLHDVDDKRDFQNWQEFSSILVCVPAWIANYVTNAEVIGEKFRKESYSGDFGILDLDYSKVSGKYPSVIDNSPVKSKLGALPSARPRLSYSAAQTAPISLSSEGSDYFSRPPPTPNVAGLSLNNFFCPLPENKDNKSSPFGSATVQTPCLHSVPDAFTNPDVATLYQKFLRLQSLEHQRLVSCSDRNSQWSTVDSLSNTSYKKNRYTDIVPYNCTRVHLKRTSPSELDYINASFIKTETSNYIACQGSISRSISDFWHMVWDNVENIGTIVMLGSLFEAGREMCTAYWPSNGIGDKQVYGDYCVKQISEENVDNSRFILRKFEIQNANFPSVKKVHHYQYPNWSDCNSPENVKSMVEFLKYVNNSHGSGNTIVHCSAGVGRTGTFIVLDTILRFPESKLSGFNPSVADSSDVVFQLVDHIRKQRMKMVQTFTQFKYVYDLIDSLQKSQVHFPVLT.

The 280-residue stretch at 260–539 folds into the Tyrosine-protein phosphatase domain; that stretch reads LYQKFLRLQS…KYVYDLIDSL (280 aa). A phosphoserine mark is found at serine 318 and serine 320. Cysteine 470 serves as the catalytic Phosphocysteine intermediate.

The protein belongs to the protein-tyrosine phosphatase family. Non-receptor class subfamily.

It localises to the cytoplasm. It carries out the reaction O-phospho-L-tyrosyl-[protein] + H2O = L-tyrosyl-[protein] + phosphate. In terms of biological role, plays a role in inhibiting the onset of mitosis. Dephosphorylates sty1/spc1 and wis1/spc2/sty2. The protein is Tyrosine-protein phosphatase 1 (pyp1) of Schizosaccharomyces pombe (strain 972 / ATCC 24843) (Fission yeast).